Reading from the N-terminus, the 417-residue chain is Serine--tRNA ligase (417 aa).

226-228 serves as a coordination point for L-serine; the sequence is TSE. Residues 257–259 and Val-273 contribute to the ATP site; that span reads RRE. Glu-280 is a binding site for L-serine. Position 344–347 (344–347) interacts with ATP; that stretch reads EVTS. Residue Thr-379 coordinates L-serine.

Belongs to the class-II aminoacyl-tRNA synthetase family. Type-1 seryl-tRNA synthetase subfamily. As to quaternary structure, homodimer. The tRNA molecule binds across the dimer.

It is found in the cytoplasm. It carries out the reaction tRNA(Ser) + L-serine + ATP = L-seryl-tRNA(Ser) + AMP + diphosphate + H(+). It catalyses the reaction tRNA(Sec) + L-serine + ATP = L-seryl-tRNA(Sec) + AMP + diphosphate + H(+). It functions in the pathway aminoacyl-tRNA biosynthesis; selenocysteinyl-tRNA(Sec) biosynthesis; L-seryl-tRNA(Sec) from L-serine and tRNA(Sec): step 1/1. Functionally, catalyzes the attachment of serine to tRNA(Ser). Is also able to aminoacylate tRNA(Sec) with serine, to form the misacylated tRNA L-seryl-tRNA(Sec), which will be further converted into selenocysteinyl-tRNA(Sec). The sequence is that of Serine--tRNA ligase from Tropheryma whipplei (strain Twist) (Whipple's bacillus).